Here is a 1120-residue protein sequence, read N- to C-terminus: Cluster 41 polyketide synthase (1120 aa).

Positions proline 7–lysine 430 constitute a Ketosynthase family 3 (KS3) domain. Catalysis depends on for beta-ketoacyl synthase activity residues cysteine 178, histidine 313, and histidine 353. The interval valine 539 to aspartate 796 is malonyl-CoA:ACP transacylase (MAT) domain. Serine 625 functions as the For acyl/malonyl transferase activity in the catalytic mechanism. A ketoreductase (KR) domain region spans residues isoleucine 804–glutamate 943. Residues aspartate 1042 to threonine 1116 enclose the Carrier domain. Residue serine 1076 is modified to O-(pantetheine 4'-phosphoryl)serine.

In terms of biological role, polyketide synthase; part of the gene cluster 41 that mediates the biosynthesis of an extracellular and diffusible metabolite that is able to stimulate colony sclerotial production. This chain is Cluster 41 polyketide synthase, found in Aspergillus flavus (strain ATCC 200026 / FGSC A1120 / IAM 13836 / NRRL 3357 / JCM 12722 / SRRC 167).